We begin with the raw amino-acid sequence, 1179 residues long: Probable manganese-transporting ATPase PDR2 (1179 aa).

At 1–20 (MSSFRVGGKVVEKVDLCRKK) the chain is on the cytoplasmic side. The helical transmembrane segment at 21 to 42 (QLVWRLDVWPFAILYTVWLTTI) threads the bilayer. Residues 43-50 (VPSIDFSD) lie on the Lumenal side of the membrane. The chain crosses the membrane as a helical span at residues 51–71 (ACIALGGLSAFHILVLLFTTW). Topologically, residues 72–192 (SVDFKCFVQF…FDYPQPTFQK (121 aa)) are cytoplasmic. The chain crosses the membrane as a helical span at residues 193-215 (LMKENCMEPFFVFQVFCVGLWCL). Topologically, residues 216–218 (DEF) are lumenal. The helical transmembrane segment at 219–238 (WYYSVFTLFMLFMFESTMAK) threads the bilayer. The Cytoplasmic segment spans residues 239-402 (SRLKTLTDLR…ERVTANSWES (164 aa)). Residues 403–422 (GLFILFLVVFAVIAAGYVLV) form a helical membrane-spanning segment. Residues 423 to 435 (KGLEDPTRSKYKL) lie on the Lumenal side of the membrane. The chain crosses the membrane as a helical span at residues 436–453 (LLGCSLIITSVIPPELPM). Topologically, residues 454–947 (ELSIAVNTSL…RQGRSTLVTT (494 aa)) are cytoplasmic. The 4-aspartylphosphate intermediate role is filled by Asp-491. Residues Asp-812 and Asp-816 each coordinate Mg(2+). Positions 833 to 880 (KLPLSPSDSSKDDKSKSKKSKLPLEPASKTITQNGEGSSKGKIPPQNR) are disordered. A helical membrane pass occupies residues 948–967 (LQMFKILGLNCLATAYVLSV). At 968–979 (MYLDGVKLGDVQ) the chain is on the lumenal side. Residues 980-997 (ATISGVLTAAFFLFISHA) form a helical membrane-spanning segment. Residues 998-1013 (RPLQTLSAERPHPSVF) lie on the Cytoplasmic side of the membrane. A helical membrane pass occupies residues 1014 to 1034 (SVYLFLSLIGQFAVHLTFLVY). Residues 1035–1059 (SVKEAEKHMPEECIEPDASFHPNLV) are Lumenal-facing. A helical membrane pass occupies residues 1060-1079 (NTVSYMVSMMLQVATFAVNY). The Cytoplasmic segment spans residues 1080-1092 (MGHPFNQSIRENK). Residues 1093-1110 (PFFYALIAGAGFFTVIAS) form a helical membrane-spanning segment. Residues 1111–1128 (DLFRDLNDSLKLVPLPQG) lie on the Lumenal side of the membrane. Residues 1129 to 1148 (LRDKLLIWASLMFIICYSWE) form a helical membrane-spanning segment. The Cytoplasmic portion of the chain corresponds to 1149 to 1179 (RLLRWAFPGKISSWKHKQRAVTANLEKKKKV).

Belongs to the cation transport ATPase (P-type) (TC 3.A.3) family. Type V subfamily. In terms of tissue distribution, highly expressed in root meristem. Expressed in pavement cells of trichomes, stipules, stamens and pollen grains.

The protein localises to the endoplasmic reticulum membrane. The catalysed reaction is ATP + H2O = ADP + phosphate + H(+). Its function is as follows. Mediates manganese transport into the endoplasmic reticulum. The ATPase activity is required for cellular manganese homeostasis. Plays an important role in pollen and root development through its impact on protein secretion and transport processes. Functions together with LPR1 and LPR2 in a common pathway that adjusts root meristem activity to phosphate availability. Under phosphate limitation, restricts SHR movement in root meristem and is required for maintaining SCR expression in the root meristem stem-cell niche as well as for proximal meristem activity. Can complement the yeast spf1 mutant. The sequence is that of Probable manganese-transporting ATPase PDR2 (PDR2) from Arabidopsis thaliana (Mouse-ear cress).